A 253-amino-acid chain; its full sequence is Small ribosomal subunit protein uS2 (253 aa).

It belongs to the universal ribosomal protein uS2 family.

This Parvibaculum lavamentivorans (strain DS-1 / DSM 13023 / NCIMB 13966) protein is Small ribosomal subunit protein uS2.